Consider the following 333-residue polypeptide: ATP synthase subunit a (333 aa).

An N-terminal signal peptide occupies residues 1–32 (MIYLHNKRKGMLKRLSALIVIGLLMNLPAVFA). 7 helical membrane-spanning segments follow: residues 100-120 (HVVM…GVGN), 161-181 (FMPF…IGLV), 185-205 (ATAT…FLVT), 229-249 (LMWI…PFAL), 254-274 (FANM…IFVF), 279-299 (IAPV…LVAF), and 300-320 (LQAY…VAHE).

It belongs to the ATPase A chain family. F-type ATPases have 2 components, CF(1) - the catalytic core - and CF(0) - the membrane proton channel. CF(1) has five subunits: alpha(3), beta(3), gamma(1), delta(1), epsilon(1). CF(0) has four main subunits: a, b, b' and c.

The protein resides in the cell inner membrane. Its function is as follows. Key component of the proton channel; it plays a direct role in the translocation of protons across the membrane. In Chloroherpeton thalassium (strain ATCC 35110 / GB-78), this protein is ATP synthase subunit a.